Here is a 222-residue protein sequence, read N- to C-terminus: Cytidylate kinase (222 aa).

Position 9 to 17 (9 to 17 (GPAGSGKTT)) interacts with ATP.

This sequence belongs to the cytidylate kinase family. Type 1 subfamily.

Its subcellular location is the cytoplasm. It carries out the reaction CMP + ATP = CDP + ADP. The catalysed reaction is dCMP + ATP = dCDP + ADP. The chain is Cytidylate kinase from Thermosipho africanus (strain TCF52B).